The following is a 293-amino-acid chain: Indole-3-glycerol phosphate synthase (293 aa).

The protein belongs to the TrpC family.

It carries out the reaction 1-(2-carboxyphenylamino)-1-deoxy-D-ribulose 5-phosphate + H(+) = (1S,2R)-1-C-(indol-3-yl)glycerol 3-phosphate + CO2 + H2O. It participates in amino-acid biosynthesis; L-tryptophan biosynthesis; L-tryptophan from chorismate: step 4/5. The polypeptide is Indole-3-glycerol phosphate synthase (Prochlorococcus marinus (strain SARG / CCMP1375 / SS120)).